A 353-amino-acid chain; its full sequence is Immune-associated nucleotide-binding protein 8 (353 aa).

A compositionally biased stretch (polar residues) spans 1–10 (MANDQKNSES). Residues 1–43 (MANDQKNSESFPAKEDHKKDDAAAPAEVDHKDEFSASQPHPVE) form a disordered region. Residues 12–34 (PAKEDHKKDDAAAPAEVDHKDEF) show a composition bias toward basic and acidic residues. The AIG1-type G domain occupies 40–248 (HPVENIVLVG…YTDEMYHMIK (209 aa)). The G1 stretch occupies residues 49 to 56 (GRTGNGKS). GTP contacts are provided by residues 49-57 (GRTGNGKSA) and Ser-70. Residues 76 to 80 (GVTME) form a G2 region. The tract at residues 98-101 (DTPG) is G3. A G4 region spans residues 168–171 (TGGD). The interval 207 to 209 (DNK) is G5. Asn-208 provides a ligand contact to GTP. The stretch at 244–291 (YHMIKEENERHKKEQEELESKGHSEEQLAALMKELQIMNERNLKAMAE) forms a coiled coil.

It belongs to the TRAFAC class TrmE-Era-EngA-EngB-Septin-like GTPase superfamily. AIG1/Toc34/Toc159-like paraseptin GTPase family. IAN subfamily. Mainly expressed in leaves.

The chain is Immune-associated nucleotide-binding protein 8 from Arabidopsis thaliana (Mouse-ear cress).